The primary structure comprises 63 residues: Venom peptide 2b (63 aa).

Positions 1-22 (MRGTSFILFAVVVILGFLHGNA) are cleaved as a signal peptide. AXPX repeat units lie at residues 22 to 25 (AEPL), 26 to 29 (ANPE), 32 to 35 (ANPD), 38 to 41 (ANPD), and 44 to 47 (ANPE). The propeptide occupies 23-48 (EPLANPEPSANPDPLANPDPLANPEA). The residue at position 62 (leucine 62) is a Leucine amide.

It belongs to the MCD family. Mastoparan subfamily. As to expression, expressed by the venom gland.

The protein resides in the secreted. It localises to the target cell membrane. Its function is as follows. Antimicrobial peptide with strong and moderate activity against the fungi B.cinerea (MIC=5 uM) and C.albicans (MIC=100 uM), the Gram-negative bacterium E.coli (MIC=200 uM) and the Gram-positive bacterium S.aureus (MIC=25 uM). Shows cytolytic activity against insect cell lines. Has potent hemolytic activity against human erythrocytes (EC(50)=64 uM). In vivo, peptide injection in the vicinity of the head and thorax of lepidopteran larvae induces feeding disorder followed by death due to starvation. The chain is Venom peptide 2b from Eumenes pomiformis (Potter wasp).